The primary structure comprises 364 residues: ERCC4 domain-containing protein EP364R (364 aa).

In terms of domain architecture, ERCC4 spans 3-102 (FLVADHREHH…QLYFFVEGPA (100 aa)). Residues 319-328 (ASRPATQPAA) show a composition bias toward polar residues. Residues 319 to 352 (ASRPATQPAATQPLHEVSDDATSNASDTSSPIGH) form a disordered region. The span at 338–348 (DATSNASDTSS) shows a compositional bias: low complexity.

It belongs to the asfivirus EP364R family.

In terms of biological role, plays a role in the inhibition of type I interferon signaling pathway. Mechanistically, specifically interacts with 2',3'-cGAMP and cleaves it via its phosphodiesterase activity. In turn, prevents 2',3'-cGAMP interaction with host ER-resident STING1 leading to inhibition of downstream signaling pathway and type I interferon production. This chain is ERCC4 domain-containing protein EP364R, found in African swine fever virus (strain Badajoz 1971 Vero-adapted) (Ba71V).